We begin with the raw amino-acid sequence, 443 residues long: Probable glycine dehydrogenase (decarboxylating) subunit 1 (443 aa).

This sequence belongs to the GcvP family. N-terminal subunit subfamily. As to quaternary structure, the glycine cleavage system is composed of four proteins: P, T, L and H. In this organism, the P 'protein' is a heterodimer of two subunits.

It catalyses the reaction N(6)-[(R)-lipoyl]-L-lysyl-[glycine-cleavage complex H protein] + glycine + H(+) = N(6)-[(R)-S(8)-aminomethyldihydrolipoyl]-L-lysyl-[glycine-cleavage complex H protein] + CO2. Functionally, the glycine cleavage system catalyzes the degradation of glycine. The P protein binds the alpha-amino group of glycine through its pyridoxal phosphate cofactor; CO(2) is released and the remaining methylamine moiety is then transferred to the lipoamide cofactor of the H protein. This is Probable glycine dehydrogenase (decarboxylating) subunit 1 from Desulfovibrio desulfuricans (strain ATCC 27774 / DSM 6949 / MB).